The primary structure comprises 202 residues: MTERSNNRQSQIYNFIKSQIKQKGYPPSVREICTAVGLKSTSTVHSYLEKLERRGFIKRDATKSRTIEVIEKSQKKEMIEVPIIGTITAGMPIIAVENIEDYFPLPMDYIKNKREIFMLRVKGESMVDAGILDGDLSLIEKVHSAENGDIVVALIENEATLKRFFKEENHIRLQPENKNMPPIIVDDCKIIGRLIGIYRQYE.

The segment at residues 29-49 (VREICTAVGLKSTSTVHSYLE) is a DNA-binding region (H-T-H motif). Catalysis depends on for autocatalytic cleavage activity residues Ser-125 and Lys-162.

The protein belongs to the peptidase S24 family. Homodimer.

The enzyme catalyses Hydrolysis of Ala-|-Gly bond in repressor LexA.. In terms of biological role, represses a number of genes involved in the response to DNA damage (SOS response), including recA and lexA. In the presence of single-stranded DNA, RecA interacts with LexA causing an autocatalytic cleavage which disrupts the DNA-binding part of LexA, leading to derepression of the SOS regulon and eventually DNA repair. This Clostridium kluyveri (strain NBRC 12016) protein is LexA repressor.